Reading from the N-terminus, the 523-residue chain is Bifunctional purine biosynthesis protein PurH (523 aa).

The MGS-like domain occupies 1–149 (MSDPVIKRAL…KNNESVTVIT (149 aa)).

This sequence belongs to the PurH family.

The enzyme catalyses (6R)-10-formyltetrahydrofolate + 5-amino-1-(5-phospho-beta-D-ribosyl)imidazole-4-carboxamide = 5-formamido-1-(5-phospho-D-ribosyl)imidazole-4-carboxamide + (6S)-5,6,7,8-tetrahydrofolate. It carries out the reaction IMP + H2O = 5-formamido-1-(5-phospho-D-ribosyl)imidazole-4-carboxamide. It participates in purine metabolism; IMP biosynthesis via de novo pathway; 5-formamido-1-(5-phospho-D-ribosyl)imidazole-4-carboxamide from 5-amino-1-(5-phospho-D-ribosyl)imidazole-4-carboxamide (10-formyl THF route): step 1/1. Its pathway is purine metabolism; IMP biosynthesis via de novo pathway; IMP from 5-formamido-1-(5-phospho-D-ribosyl)imidazole-4-carboxamide: step 1/1. This Chlorobaculum parvum (strain DSM 263 / NCIMB 8327) (Chlorobium vibrioforme subsp. thiosulfatophilum) protein is Bifunctional purine biosynthesis protein PurH.